Here is a 655-residue protein sequence, read N- to C-terminus: FYVE, RhoGEF and PH domain-containing protein 2 (655 aa).

2 positions are modified to phosphoserine: serine 11 and serine 48. The tract at residues 18–64 is disordered; that stretch reads VFENSRTPEAAPRGQRLEDVHHRPECRPPESPGPREKTNVGEAVGSE. The segment covering 32–56 has biased composition (basic and acidic residues); the sequence is QRLEDVHHRPECRPPESPGPREKTN. The region spanning 102–290 is the DH domain; that stretch reads PEKKIVQELL…FSAAQHSNAA (189 aa). The PH 1 domain maps to 319–418; the sequence is TLLREGPVLK…WMQAFQAAID (100 aa). The FYVE-type zinc finger occupies 458 to 518; the sequence is DKMVTMCMRC…VCLHCYAFLT (61 aa). Zn(2+) is bound by residues cysteine 464, cysteine 467, cysteine 481, cysteine 484, cysteine 489, cysteine 492, cysteine 510, and cysteine 513. Residues 544-641 enclose the PH 2 domain; that stretch reads QSLMCSFLQL…WVKAMERAAS (98 aa). Residue serine 654 is modified to Phosphoserine.

The protein localises to the cytoplasm. It is found in the cytoskeleton. It localises to the nucleus. The protein resides in the early endosome. Its subcellular location is the early endosome membrane. The protein localises to the cell projection. It is found in the ruffle membrane. Functionally, activates CDC42, a member of the Ras-like family of Rho- and Rac proteins, by exchanging bound GDP for free GTP. Activates JNK1 via CDC42 but not RAC1. Binds to phosphatidylinositol 4,5-bisphosphate, phosphatidylinositol 3,4,5-trisphosphate, phosphatidylinositol 5-monophosphate, phosphatidylinositol 4-monophosphate and phosphatidylinositol 3-monophosphate. The protein is FYVE, RhoGEF and PH domain-containing protein 2 (FGD2) of Homo sapiens (Human).